We begin with the raw amino-acid sequence, 165 residues long: V-type proton ATPase 16 kDa proteolipid subunit (165 aa).

At 1–10 (MSSVFSGDET) the chain is on the lumenal side. A helical transmembrane segment spans residues 11–33 (APFFGFLGAAAALVFSCMGAAYG). At 34 to 55 (TAKSGVGVASMGVMRPELVMKS) the chain is on the cytoplasmic side. The helical transmembrane segment at 56 to 76 (IVPVVMAGVLGIYGLIIAVII) threads the bilayer. Residues 77–95 (STGINPKAKPYFLFDGYAH) are Lumenal-facing. Residues 96-117 (LSSGLACGLAGLAAGMAIGIVG) traverse the membrane as a helical segment. Topologically, residues 118–129 (DAGVRANAQQPK) are cytoplasmic. Residues 130–155 (LFVGMILILIFAEALALYGLIVGIIL) form a helical membrane-spanning segment. Residues 156–165 (SSRAGQSRAD) are Lumenal-facing.

Belongs to the V-ATPase proteolipid subunit family. In terms of assembly, V-ATPase is a heteromultimeric enzyme composed of a peripheral catalytic V1 complex (main components: subunits A, B, C, D, E, and F) attached to an integral membrane V0 proton pore complex (main component: the proteolipid protein; which is present as a hexamer that forms the proton-conducting pore).

It localises to the vacuole membrane. In terms of biological role, proton-conducting pore forming subunit of the membrane integral V0 complex of vacuolar ATPase. V-ATPase is responsible for acidifying a variety of intracellular compartments in eukaryotic cells. The polypeptide is V-type proton ATPase 16 kDa proteolipid subunit (VATP-P1) (Avena sativa (Oat)).